The sequence spans 364 residues: Isoflavone 4'-O-methyltransferase (364 aa).

S-adenosyl-L-methionine-binding positions include 206 to 209 (VGGG), aspartate 230, 230 to 231 (DQ), 250 to 251 (DM), and lysine 264. The active-site Proton acceptor is histidine 268.

The protein belongs to the class I-like SAM-binding methyltransferase superfamily. Cation-independent O-methyltransferase family. COMT subfamily. In terms of assembly, homodimer.

The enzyme catalyses a 4'-hydroxyisoflavone + S-adenosyl-L-methionine = a 4'-methoxyisoflavone + S-adenosyl-L-homocysteine + H(+). It carries out the reaction (2R,3S)-2,4',7-trihydroxyisoflavanone + S-adenosyl-L-methionine = (2R,3S)-2,7-dihydroxy-4'-methoxyisoflavanone + S-adenosyl-L-homocysteine + H(+). 2-hydroxyisoflavanone 4'-O-methyltransferase involved in the biosynthesis of the phytoalexin medicarpin. Has also an in vitro (+)-6a-hydroxymaackiain-3-0-methyltransferase activity, converting the pterocarpan 6a-hydroxymaackiain into pisatin. No activity with di- or trihydroxylated isoflavones, including daidzein and genistein, or with (-)-medicarpin and maackiain. The dual activity for either 3- or 4'-O-methylation depends upon substrate availability. The sequence is that of Isoflavone 4'-O-methyltransferase (HI4'OMT) from Medicago truncatula (Barrel medic).